A 243-amino-acid polypeptide reads, in one-letter code: rRNA adenine N-6-methyltransferase (243 aa).

Positions 11, 13, 38, 59, 84, and 101 each coordinate S-adenosyl-L-methionine.

Belongs to the class I-like SAM-binding methyltransferase superfamily. rRNA adenine N(6)-methyltransferase family.

It catalyses the reaction adenosine(2085) in 23S rRNA + 2 S-adenosyl-L-methionine = N(6)-dimethyladenosine(2085) in 23S rRNA + 2 S-adenosyl-L-homocysteine + 2 H(+). In terms of biological role, this protein produces a dimethylation of the adenine residue at position 2085 in 23S rRNA, resulting in reduced affinity between ribosomes and macrolide-lincosamide-streptogramin B antibiotics. In Staphylococcus aureus (strain Mu50 / ATCC 700699), this protein is rRNA adenine N-6-methyltransferase (ermA1).